The primary structure comprises 92 residues: Large ribosomal subunit protein bL28 (92 aa).

This sequence belongs to the bacterial ribosomal protein bL28 family.

This is Large ribosomal subunit protein bL28 from Borrelia garinii subsp. bavariensis (strain ATCC BAA-2496 / DSM 23469 / PBi) (Borreliella bavariensis).